A 300-amino-acid chain; its full sequence is MDSITVKASATSANLGAGFDVMGIALESPGDIIRVEKADELSIVVKGRGAEGIPADPEKNTAGLVALAMDKKVRITIKSGIRPGSGLGSSAAPAAGTAVAINELFSLGYSKEELVWIAARGEMAAAGIVHADNVAPCIMGGLTLVCNNYVEHVELPPMGVVAVLPEIVVSTKSARGILPQQVPLQEMVLNVSKAAMLMAGVVKKDPVIIGRSLSDTFNEKYRSPLIKGYGSVREAALDSGAYGVAISGSGPTMLALCPEDRSFDVAAAMRKKFEEAGVVSEAYVTCIGKGVRIINRDEEE.

82–92 provides a ligand contact to ATP; it reads RPGSGLGSSAA.

This sequence belongs to the GHMP kinase family. Homoserine kinase subfamily.

It localises to the cytoplasm. It catalyses the reaction L-homoserine + ATP = O-phospho-L-homoserine + ADP + H(+). It participates in amino-acid biosynthesis; L-threonine biosynthesis; L-threonine from L-aspartate: step 4/5. Functionally, catalyzes the ATP-dependent phosphorylation of L-homoserine to L-homoserine phosphate. This Methanocella arvoryzae (strain DSM 22066 / NBRC 105507 / MRE50) protein is Homoserine kinase.